A 152-amino-acid polypeptide reads, in one-letter code: Cytosolic calcium-binding protein 1 (152 aa).

7 consecutive repeat copies span residues 57 to 62, 67 to 71, 78 to 82, 104 to 108, 112 to 116, 124 to 129, and 131 to 136. The tract at residues 57–136 is 7 X 5 AA approximate repeats of V-E-E-K-K; the sequence is VEETEKPIEE…EKKPEAEEEK (80 aa). Residues 60–152 are disordered; it reads TEKPIEETEE…VTAPVEKADE (93 aa). The segment covering 96 to 138 has biased composition (basic and acidic residues); the sequence is DESKTEEVVEAKKEEEVEEKKTEEAPVVVEEEKKPEAEEEKPA.

Predominantly expressed in petioles (at protein level). Mainly observed in shoots, flowers, siliques and roots, and, to a lower extent, in stems and leaves.

The protein resides in the cytoplasm. The protein localises to the cytosol. Its function is as follows. Binds calcium Ca(2+) and may act as a signal mediator to buffer Ca(2+). The protein is Cytosolic calcium-binding protein 1 of Arabidopsis thaliana (Mouse-ear cress).